A 388-amino-acid chain; its full sequence is Succinate--CoA ligase [ADP-forming] subunit beta (388 aa).

The ATP-grasp domain occupies 9–244 (KQLFAEFGLP…PSQEDEREAH (236 aa)). Residues Lys46, 53-55 (GRG), Glu99, Ser102, and Glu107 each bind ATP. Residues Asn199 and Asp213 each coordinate Mg(2+). Substrate is bound by residues Asn264 and 321–323 (GIV).

It belongs to the succinate/malate CoA ligase beta subunit family. In terms of assembly, heterotetramer of two alpha and two beta subunits. The cofactor is Mg(2+).

It carries out the reaction succinate + ATP + CoA = succinyl-CoA + ADP + phosphate. The enzyme catalyses GTP + succinate + CoA = succinyl-CoA + GDP + phosphate. Its pathway is carbohydrate metabolism; tricarboxylic acid cycle; succinate from succinyl-CoA (ligase route): step 1/1. In terms of biological role, succinyl-CoA synthetase functions in the citric acid cycle (TCA), coupling the hydrolysis of succinyl-CoA to the synthesis of either ATP or GTP and thus represents the only step of substrate-level phosphorylation in the TCA. The beta subunit provides nucleotide specificity of the enzyme and binds the substrate succinate, while the binding sites for coenzyme A and phosphate are found in the alpha subunit. In Vibrio campbellii (strain ATCC BAA-1116), this protein is Succinate--CoA ligase [ADP-forming] subunit beta.